Here is a 719-residue protein sequence, read N- to C-terminus: Homeobox protein SIX5 (719 aa).

Low complexity-rich tracts occupy residues Met-1–Thr-22 and Gln-31–Ser-65. Disordered regions lie at residues Met-1–Val-73 and Trp-241–Met-287. Positions Gly-194–Thr-253 form a DNA-binding region, homeobox. Positions Glu-272 to Arg-282 are enriched in basic and acidic residues.

This sequence belongs to the SIX/Sine oculis homeobox family. In terms of assembly, probably binds DNA dimer. Interacts with EYA3, and probably EYA1 and EYA2.

It localises to the nucleus. Functionally, transcription factor that is thought to be involved in regulation of organogenesis. May be involved in determination and maintenance of retina formation. Binds a 5'-GGTGTCAG-3' motif present in the ARE regulatory element of ATP1A1. Binds a 5'-TCA[AG][AG]TTNC-3' motif present in the MEF3 element in the myogenin promoter, and in the IGFBP5 promoter. Thought to be regulated by association with Dach and Eya proteins, and seems to be coactivated by EYA1, EYA2 and EYA3. In Mus musculus (Mouse), this protein is Homeobox protein SIX5 (Six5).